Consider the following 508-residue polypeptide: Photosystem II CP47 reaction center protein (508 aa).

6 helical membrane passes run 21–36 (SVHIMHTALVAGWAGS), 101–115 (IVFSGLCFLAAIWHW), 140–156 (GIHLFLSGVACFGFGAF), 203–218 (IAAGTLGILAGLFHLS), 237–252 (VLSSSIAAVFFAAFVV), and 457–472 (SFALLFFFGHIWHGAR).

It belongs to the PsbB/PsbC family. PsbB subfamily. PSII is composed of 1 copy each of membrane proteins PsbA, PsbB, PsbC, PsbD, PsbE, PsbF, PsbH, PsbI, PsbJ, PsbK, PsbL, PsbM, PsbT, PsbX, PsbY, PsbZ, Psb30/Ycf12, at least 3 peripheral proteins of the oxygen-evolving complex and a large number of cofactors. It forms dimeric complexes. Binds multiple chlorophylls. PSII binds additional chlorophylls, carotenoids and specific lipids. serves as cofactor.

It localises to the plastid. Its subcellular location is the chloroplast thylakoid membrane. Functionally, one of the components of the core complex of photosystem II (PSII). It binds chlorophyll and helps catalyze the primary light-induced photochemical processes of PSII. PSII is a light-driven water:plastoquinone oxidoreductase, using light energy to abstract electrons from H(2)O, generating O(2) and a proton gradient subsequently used for ATP formation. The chain is Photosystem II CP47 reaction center protein from Arabis hirsuta (Hairy rock-cress).